The following is a 485-amino-acid chain: Adenosylhomocysteinase (485 aa).

The substrate site is built by T64, D139, and E205. An NAD(+)-binding site is contributed by 206 to 208; that stretch reads TTT. Substrate is bound by residues K235 and D239. NAD(+)-binding positions include N240, 269–274, E292, N327, and 348–350; these read GYGDVG and IGH.

The protein belongs to the adenosylhomocysteinase family. In terms of assembly, homotetramer. NAD(+) serves as cofactor.

It carries out the reaction S-adenosyl-L-homocysteine + H2O = L-homocysteine + adenosine. It participates in amino-acid biosynthesis; L-homocysteine biosynthesis; L-homocysteine from S-adenosyl-L-homocysteine: step 1/1. Its function is as follows. Adenosylhomocysteine is a competitive inhibitor of S-adenosyl-L-methionine-dependent methyl transferase reactions; therefore adenosylhomocysteinase may play a key role in the control of methylations via regulation of the intracellular concentration of adenosylhomocysteine. In Mesembryanthemum crystallinum (Common ice plant), this protein is Adenosylhomocysteinase (SAHH).